Consider the following 462-residue polypeptide: tRNA-2-methylthio-N(6)-dimethylallyladenosine synthase (462 aa).

Residues 28-144 (KKLFVKTYGC…LPKMMEAVNA (117 aa)) enclose the MTTase N-terminal domain. [4Fe-4S] cluster is bound by residues Cys-37, Cys-73, Cys-107, Cys-181, Cys-185, and Cys-188. The Radical SAM core domain occupies 167 to 398 (ATRGPTAFLT…QALLTQQQRA (232 aa)). The TRAM domain maps to 401-462 (DAMVGRRVKV…KTNSLTGRLV (62 aa)).

This sequence belongs to the methylthiotransferase family. MiaB subfamily. Monomer. The cofactor is [4Fe-4S] cluster.

It is found in the cytoplasm. It catalyses the reaction N(6)-dimethylallyladenosine(37) in tRNA + (sulfur carrier)-SH + AH2 + 2 S-adenosyl-L-methionine = 2-methylsulfanyl-N(6)-dimethylallyladenosine(37) in tRNA + (sulfur carrier)-H + 5'-deoxyadenosine + L-methionine + A + S-adenosyl-L-homocysteine + 2 H(+). Functionally, catalyzes the methylthiolation of N6-(dimethylallyl)adenosine (i(6)A), leading to the formation of 2-methylthio-N6-(dimethylallyl)adenosine (ms(2)i(6)A) at position 37 in tRNAs that read codons beginning with uridine. The sequence is that of tRNA-2-methylthio-N(6)-dimethylallyladenosine synthase from Jannaschia sp. (strain CCS1).